The chain runs to 200 residues: Protein Rv0461 (200 aa).

A disordered region spans residues 47 to 67 (DRAGKSWPGSTPKPQEDPVGV). 3 helical membrane-spanning segments follow: residues 102–122 (FVLV…SLFY), 134–154 (VFVV…LALV), and 159–179 (LITA…AAAA).

The protein localises to the cell membrane. In Mycobacterium tuberculosis (strain ATCC 25618 / H37Rv), this protein is Protein Rv0461.